The primary structure comprises 249 residues: Ribonuclease 3 (249 aa).

The RNase III domain occupies 20 to 149 (FKEFQERISV…FIGALYLDQG (130 aa)). E62 is a Mg(2+) binding site. Residue D66 is part of the active site. Mg(2+)-binding residues include D135 and E138. E138 is a catalytic residue. In terms of domain architecture, DRBM spans 175-244 (DFKSQLQEFV…AQEALAKMQK (70 aa)). The disordered stretch occupies residues 223-249 (NGRSKKEAEQHAAQEALAKMQKHHTKQ).

The protein belongs to the ribonuclease III family. Homodimer. Mg(2+) serves as cofactor.

It is found in the cytoplasm. It carries out the reaction Endonucleolytic cleavage to 5'-phosphomonoester.. Its function is as follows. Digests double-stranded RNA. Involved in the processing of primary rRNA transcript to yield the immediate precursors to the large and small rRNAs (23S and 16S). Processes some mRNAs, and tRNAs when they are encoded in the rRNA operon. Processes pre-crRNA and tracrRNA of type II CRISPR loci if present in the organism. The polypeptide is Ribonuclease 3 (Bacillus velezensis (strain DSM 23117 / BGSC 10A6 / LMG 26770 / FZB42) (Bacillus amyloliquefaciens subsp. plantarum)).